A 165-amino-acid polypeptide reads, in one-letter code: SsrA-binding protein (165 aa).

The protein belongs to the SmpB family.

The protein localises to the cytoplasm. Functionally, required for rescue of stalled ribosomes mediated by trans-translation. Binds to transfer-messenger RNA (tmRNA), required for stable association of tmRNA with ribosomes. tmRNA and SmpB together mimic tRNA shape, replacing the anticodon stem-loop with SmpB. tmRNA is encoded by the ssrA gene; the 2 termini fold to resemble tRNA(Ala) and it encodes a 'tag peptide', a short internal open reading frame. During trans-translation Ala-aminoacylated tmRNA acts like a tRNA, entering the A-site of stalled ribosomes, displacing the stalled mRNA. The ribosome then switches to translate the ORF on the tmRNA; the nascent peptide is terminated with the 'tag peptide' encoded by the tmRNA and targeted for degradation. The ribosome is freed to recommence translation, which seems to be the essential function of trans-translation. The chain is SsrA-binding protein from Ruthia magnifica subsp. Calyptogena magnifica.